Reading from the N-terminus, the 358-residue chain is ATP-dependent (S)-NAD(P)H-hydrate dehydratase (358 aa).

The region spanning 63–354 is the YjeF C-terminal domain; sequence LLQSAKNVIP…QQIHQAFEEL (292 aa). (6S)-NADPHX contacts are provided by residues glycine 163 and 220–226; that span reads NVVEFDR. Residues 261 to 265 and 280 to 289 contribute to the ATP site; these read KGQHD and GSNRRCGGQG. Aspartate 290 is a (6S)-NADPHX binding site.

It belongs to the NnrD/CARKD family. Requires Mg(2+) as cofactor.

The catalysed reaction is (6S)-NADHX + ATP = ADP + phosphate + NADH + H(+). It catalyses the reaction (6S)-NADPHX + ATP = ADP + phosphate + NADPH + H(+). Functionally, catalyzes the dehydration of the S-form of NAD(P)HX at the expense of ATP, which is converted to ADP. Together with NAD(P)HX epimerase, which catalyzes the epimerization of the S- and R-forms, the enzyme allows the repair of both epimers of NAD(P)HX, a damaged form of NAD(P)H that is a result of enzymatic or heat-dependent hydration. The sequence is that of ATP-dependent (S)-NAD(P)H-hydrate dehydratase from Nematostella vectensis (Starlet sea anemone).